A 907-amino-acid chain; its full sequence is MESRIWCLVVCVNLCIVCLGAAVSSSSTRGTSATHSHHSSHTTSAAHSRSGSVSQRVTSSQTVSHGVNETIYNTTLKYGDVVGVNTTKYPYRVCSMAQGTDLIRFERNIVCTSMKPINEDLDEGIMVVYKRNIVAHTFKVRVYQKVLTFRRSYAYIHTTYLLGSNTEYVAPPMWEIHHINSHSQCYSSYSRVIAGTVFVAYHRDSYENKTMQLMPDDYSNTHSTRYVTVKDQWHSRGSTWLYRETCNLNCMVTITTARSKYPYHFFATSTGDVVDISPFYNGTNRNASYFGENADKFFIFPNYTIVSDFGRPNSALETHRLVAFLERADSVISWDIQDEKNVTCQLTFWEASERTIRSEAEDSYHFSSAKMTATFLSKKQEVNMSDSALDCVRDEAINKLQQIFNTSYNQTYEKYGNVSVFETTGGLVVFWQGIKQKSLVELERLANRSSLNLTHNRTKRSTDGNNATHLSNMESVHNLVYAQLQFTYDTLRGYINRALAQIAEAWCVDQRRTLEVFKELSKINPSAILSAIYNKPIAARFMGDVLGLASCVTINQTSVKVLRDMNVKESPGRCYSRPVVIFNFANSSYVQYGQLGEDNEILLGNHRTEECQLPSLKIFIAGNSAYEYVDYLFKRMIDLSSISTVDSMIALDIDPLENTDFRVLELYSQKELRSSNVFDLEEIMREFNSYKQRVKYVEDKVVDPLPPYLKGLDDLMSGLGAAGKAVGVAIGAVGGAVASVVEGVATFLKNPFGAFTIILVAIAVVIIIYLIYTRQRRLCMQPLQNLFPYLVSADGTTVTSGNTKDTSLQAPPSYEESVYNSGRKGPGPPSSDASTAAPPYTNEQAYQMLLALVRLDAEQRAQQNGTDSLDGQTGTQDKGQKPNLLDRLRHRKNGYRHLKDSDEEENV.

The first 22 residues, 1-22 (MESRIWCLVVCVNLCIVCLGAA), serve as a signal peptide directing secretion. Residues 23 to 751 (VSSSSTRGTS…EGVATFLKNP (729 aa)) are Virion surface-facing. Residues 29–62 (RGTSATHSHHSSHTTSAAHSRSGSVSQRVTSSQT) form a disordered region. Residues 41-62 (HTTSAAHSRSGSVSQRVTSSQT) show a composition bias toward low complexity. Asparagine 68, asparagine 73, and asparagine 85 each carry an N-linked (GlcNAc...) asparagine; by host glycan. 4 disulfide bridges follow: cysteine 94–cysteine 551, cysteine 111–cysteine 507, cysteine 185–cysteine 250, and cysteine 344–cysteine 391. The tract at residues 152 to 158 (SYAYIHT) is involved in fusion and/or binding to host membrane. An N-linked (GlcNAc...) asparagine; by host glycan is attached at asparagine 208. Residues 237-244 (GSTWLYRE) form an involved in fusion and/or binding to host membrane region. 14 N-linked (GlcNAc...) asparagine; by host glycosylation sites follow: asparagine 281, asparagine 286, asparagine 302, asparagine 341, asparagine 383, asparagine 405, asparagine 409, asparagine 417, asparagine 447, asparagine 452, asparagine 456, asparagine 466, asparagine 555, and asparagine 586. Cysteine 574 and cysteine 611 are disulfide-bonded. 2 hydrophobic membrane proximal region regions span residues 697–749 (VEDK…TFLK) and 708–748 (YLKG…ATFL). The chain crosses the membrane as a helical span at residues 752 to 772 (FGAFTIILVAIAVVIIIYLIY). Over 773-907 (TRQRRLCMQP…LKDSDEEENV (135 aa)) the chain is Intravirion. Composition is skewed to polar residues over residues 798–810 (VTSG…SLQA) and 860–877 (RAQQ…GTQD). 2 disordered regions span residues 798 to 838 (VTSG…TAAP) and 860 to 907 (RAQQ…EENV). The segment covering 878–887 (KGQKPNLLDR) has biased composition (basic and acidic residues). Residues 895–898 (YRHL) carry the Internalization motif motif.

The protein belongs to the herpesviridae glycoprotein B family. Homotrimer; disulfide-linked. Binds to heparan sulfate proteoglycans. Interacts with gH/gL heterodimer. Interacts with host C-type lectin CD209/DC-SIGN. Interacts with host ITGB1, EGFR, and PDGFRA. In terms of processing, a proteolytic cleavage by host furin generates two subunits that remain linked by disulfide bonds.

Its subcellular location is the virion membrane. The protein localises to the host cell membrane. The protein resides in the host endosome membrane. It localises to the host Golgi apparatus membrane. Functionally, envelope glycoprotein that plays a role in host cell entry, cell to-cell virus transmission, and fusion of infected cells. May be involved in the initial attachment via binding to heparan sulfate together with the gM/gN complex that binds heparin with higher affinity. Interacts with host integrin ITGB1, PDGFRA and EGFR that likely serve as postattachment entry receptors. Also participates in the fusion of viral and cellular membranes leading to virus entry into the host cell. Membrane fusion is mediated by the fusion machinery composed at least of gB and the heterodimer gH/gL. The polypeptide is Envelope glycoprotein B (Homo sapiens (Human)).